A 333-amino-acid polypeptide reads, in one-letter code: Thiamine-monophosphate kinase (333 aa).

Mg(2+)-binding residues include Asp-35, Thr-50, and Asp-51. Residue His-58 coordinates substrate. Position 80 (Asp-80) interacts with Mg(2+). ATP is bound by residues Tyr-111, 128–129 (GD), and Arg-153. Asp-129 is a binding site for Mg(2+). A Mg(2+)-binding site is contributed by Asp-230. Ser-232 serves as a coordination point for ATP. Asp-233 contacts Mg(2+). Residues Glu-278 and Phe-330 each coordinate substrate.

Belongs to the thiamine-monophosphate kinase family.

The enzyme catalyses thiamine phosphate + ATP = thiamine diphosphate + ADP. It participates in cofactor biosynthesis; thiamine diphosphate biosynthesis; thiamine diphosphate from thiamine phosphate: step 1/1. In terms of biological role, catalyzes the ATP-dependent phosphorylation of thiamine-monophosphate (TMP) to form thiamine-pyrophosphate (TPP), the active form of vitamin B1. This is Thiamine-monophosphate kinase from Prochlorococcus marinus (strain SARG / CCMP1375 / SS120).